Reading from the N-terminus, the 459-residue chain is Bifunctional protein GlmU (459 aa).

A pyrophosphorylase region spans residues 1–229; sequence MSNFAIILAA…FDESLGVNDR (229 aa). Residues 8–11, K22, Q72, and 77–78 each bind UDP-N-acetyl-alpha-D-glucosamine; these read LAAG and GT. Residue D102 coordinates Mg(2+). Residues G139, E154, N169, and N227 each contribute to the UDP-N-acetyl-alpha-D-glucosamine site. N227 is a Mg(2+) binding site. The tract at residues 230–250 is linker; sequence VALATAESVMRRRINHKHMVN. The tract at residues 251–459 is N-acetyltransferase; sequence GVSFVNPEAT…TRLPHHPKNQ (209 aa). The UDP-N-acetyl-alpha-D-glucosamine site is built by R332 and K350. Catalysis depends on H362, which acts as the Proton acceptor. Y365 and N376 together coordinate UDP-N-acetyl-alpha-D-glucosamine. Acetyl-CoA contacts are provided by residues A379, 385-386, S404, A422, and R439; that span reads NY.

In the N-terminal section; belongs to the N-acetylglucosamine-1-phosphate uridyltransferase family. It in the C-terminal section; belongs to the transferase hexapeptide repeat family. Homotrimer. Requires Mg(2+) as cofactor.

It localises to the cytoplasm. It carries out the reaction alpha-D-glucosamine 1-phosphate + acetyl-CoA = N-acetyl-alpha-D-glucosamine 1-phosphate + CoA + H(+). The enzyme catalyses N-acetyl-alpha-D-glucosamine 1-phosphate + UTP + H(+) = UDP-N-acetyl-alpha-D-glucosamine + diphosphate. It functions in the pathway nucleotide-sugar biosynthesis; UDP-N-acetyl-alpha-D-glucosamine biosynthesis; N-acetyl-alpha-D-glucosamine 1-phosphate from alpha-D-glucosamine 6-phosphate (route II): step 2/2. Its pathway is nucleotide-sugar biosynthesis; UDP-N-acetyl-alpha-D-glucosamine biosynthesis; UDP-N-acetyl-alpha-D-glucosamine from N-acetyl-alpha-D-glucosamine 1-phosphate: step 1/1. It participates in bacterial outer membrane biogenesis; LPS lipid A biosynthesis. Catalyzes the last two sequential reactions in the de novo biosynthetic pathway for UDP-N-acetylglucosamine (UDP-GlcNAc). The C-terminal domain catalyzes the transfer of acetyl group from acetyl coenzyme A to glucosamine-1-phosphate (GlcN-1-P) to produce N-acetylglucosamine-1-phosphate (GlcNAc-1-P), which is converted into UDP-GlcNAc by the transfer of uridine 5-monophosphate (from uridine 5-triphosphate), a reaction catalyzed by the N-terminal domain. The chain is Bifunctional protein GlmU from Streptococcus pneumoniae (strain Hungary19A-6).